A 138-amino-acid polypeptide reads, in one-letter code: Putative pre-16S rRNA nuclease (138 aa).

This sequence belongs to the YqgF nuclease family.

Its subcellular location is the cytoplasm. In terms of biological role, could be a nuclease involved in processing of the 5'-end of pre-16S rRNA. This is Putative pre-16S rRNA nuclease from Haemophilus ducreyi (strain 35000HP / ATCC 700724).